The following is a 54-amino-acid chain: Ribulose bisphosphate carboxylase large chain (54 aa).

A propeptide spanning residues 1 to 2 (MS) is cleaved from the precursor. Proline 3 bears the N-acetylproline mark. Position 14 is an N6,N6,N6-trimethyllysine (lysine 14).

The protein belongs to the RuBisCO large chain family. Type I subfamily. In terms of assembly, heterohexadecamer of 8 large chains and 8 small chains.

The protein localises to the plastid. It localises to the chloroplast. The catalysed reaction is 2 (2R)-3-phosphoglycerate + 2 H(+) = D-ribulose 1,5-bisphosphate + CO2 + H2O. It carries out the reaction D-ribulose 1,5-bisphosphate + O2 = 2-phosphoglycolate + (2R)-3-phosphoglycerate + 2 H(+). RuBisCO catalyzes two reactions: the carboxylation of D-ribulose 1,5-bisphosphate, the primary event in carbon dioxide fixation, as well as the oxidative fragmentation of the pentose substrate in the photorespiration process. Both reactions occur simultaneously and in competition at the same active site. This chain is Ribulose bisphosphate carboxylase large chain (rbcL), found in Magnolia liliiflora (Mulan magnolia).